The chain runs to 511 residues: UDP-N-acetylmuramoyl-L-alanyl-D-glutamate--2,6-diaminopimelate ligase (511 aa).

Ser30 is a binding site for UDP-N-acetyl-alpha-D-muramoyl-L-alanyl-D-glutamate. Gly110–Thr116 contacts ATP. Residues Thr152–Thr153, Ser179, Gln185, and Arg187 each bind UDP-N-acetyl-alpha-D-muramoyl-L-alanyl-D-glutamate. Residue Lys219 is modified to N6-carboxylysine. Meso-2,6-diaminopimelate is bound by residues Arg385, Asp409–Arg412, Gly476, and Glu480. Positions Asp409–Arg412 match the Meso-diaminopimelate recognition motif motif.

Belongs to the MurCDEF family. MurE subfamily. It depends on Mg(2+) as a cofactor. Post-translationally, carboxylation is probably crucial for Mg(2+) binding and, consequently, for the gamma-phosphate positioning of ATP.

It is found in the cytoplasm. It catalyses the reaction UDP-N-acetyl-alpha-D-muramoyl-L-alanyl-D-glutamate + meso-2,6-diaminopimelate + ATP = UDP-N-acetyl-alpha-D-muramoyl-L-alanyl-gamma-D-glutamyl-meso-2,6-diaminopimelate + ADP + phosphate + H(+). Its pathway is cell wall biogenesis; peptidoglycan biosynthesis. Functionally, catalyzes the addition of meso-diaminopimelic acid to the nucleotide precursor UDP-N-acetylmuramoyl-L-alanyl-D-glutamate (UMAG) in the biosynthesis of bacterial cell-wall peptidoglycan. The chain is UDP-N-acetylmuramoyl-L-alanyl-D-glutamate--2,6-diaminopimelate ligase from Geobacter metallireducens (strain ATCC 53774 / DSM 7210 / GS-15).